We begin with the raw amino-acid sequence, 704 residues long: MAAEVYFGDLELFEPFDHPEESIPEPVHTRFKDDDEEDENGVGDAELRERLRQCEETIEQLRAENQELKRKLNILTRPSGILVNDTKLDGPILQILFMNNAISKQYHQEIEEFVSNLVKRFEEQQKNDVEKTSFNLLPQPSSIVLEEDHKVEEACAIKNNKEAFSVVGSVLYFTNFCLDKLGQPLLNENPQLSEGWEIPKYHQVFSHIVSLEGQEIQVKAKRPKPHCFNCGSEEHQMKDCPMPRNAARISEKRKEYMDACGEANNQNFQQRYHAEEVEERFGRFKPGVISEELQDALGVTDKSLPPFIYRMRQLGYPPGWLKEAELENSGLALYDGKDGTDGETEVGEIQQNKSVTYDLSKLVNYPGFNISTPRGIPDEWRIFGSIPMQACQQKDVFANYLTSNFQAPGVKSGNKRSSSHSSPGSPKKQKKESNSAGSPADMELDSDMEVPHGSQSSESFQFQPPLPPDTPPLPRGTPPPIFTPPLPKGTPPLTPSDSPQTRTASGAVDEDALTLEELEEQQRRIWAALEQAESLNSDSDAPVDTPLTGNSVASSPCPNELDLPIPEGKTSEKQTLDEPEVPEIFTDKSEAGHASSPDCEVTSLCQKKAELAPVNTEGALLDNGSVVPNCDISNGGSQKLVPADTSPSMATKIHSPIPDMSKFATGITPFEFENMAESTGMYLRIRSLLKNSPRNQQKNKKASE.

Ala-2 is modified (N-acetylalanine). Positions 16–33 (FDHPEESIPEPVHTRFKD) are enriched in basic and acidic residues. Residues 16–43 (FDHPEESIPEPVHTRFKDDDEEDENGVG) are disordered. Residues 43–78 (GDAELRERLRQCEETIEQLRAENQELKRKLNILTRP) adopt a coiled-coil conformation. Residues 225-242 (PHCFNCGSEEHQMKDCPM) form a CCHC-type zinc finger. 2 RBM7 binding regions span residues 284–297 (FKPG…QDAL) and 307–322 (FIYR…GWLK). Phosphothreonine is present on Thr-340. 2 disordered regions span residues 407-516 (APGV…LTLE) and 529-599 (LEQA…SPDC). Lys-411 is covalently cross-linked (Glycyl lysine isopeptide (Lys-Gly) (interchain with G-Cter in SUMO2)). The span at 454-463 (SQSSESFQFQ) shows a compositional bias: low complexity. The segment covering 464 to 494 (PPLPPDTPPLPRGTPPPIFTPPLPKGTPPLT) has biased composition (pro residues). Phosphothreonine is present on residues Thr-470, Thr-477, Thr-483, and Thr-490. Residues 514 to 538 (TLEELEEQQRRIWAALEQAESLNSD) are a coiled coil. Over residues 547-557 (LTGNSVASSPC) the composition is skewed to polar residues. Thr-575 is subject to Phosphothreonine. The residue at position 596 (Ser-596) is a Phosphoserine. Thr-645 bears the Phosphothreonine mark. Ser-646, Ser-655, and Ser-692 each carry phosphoserine. An MTREX binding region spans residues 656–704 (PIPDMSKFATGITPFEFENMAESTGMYLRIRSLLKNSPRNQQKNKKASE).

The protein belongs to the ZCCHC8 family. In terms of assembly, component of a nuclear TRAMP-like complex, an ATP-dependent exosome regulatory complex consisting of a helicase (MTREX), an oligadenylate polymerase (TENT4B or TENT4A), and a substrate specific RNA-binding factor (ZCCHC7 or ZCCHC8). Several TRAMP-like complexes exist with specific compositions and are associated with nuclear, or nucleolar RNA exosomes. Identified in the spliceosome C complex. Component of the nuclear exosome targeting (NEXT) complex composed of MTREX, ZCCHC8, and RBM7 that directs a subset of non-coding short-lived RNAs for exosomal degradation. Interacts with proteins involved in RNA processing and degradation such as MTREX and RBM7; interaction with MTREX enhances MTREX RNA helicase activity and bridges between RBM7 and MTREX. Interacts with TERC, the telomerase RNA component. Post-translationally, phosphorylation at Thr-490 by GSK3 is triggered in cells entering mitosis.

The protein localises to the nucleus. It is found in the nucleoplasm. Scaffolding subunit of the trimeric nuclear exosome targeting (NEXT) complex that is involved in the surveillance and turnover of aberrant transcripts and non-coding RNAs. NEXT functions as an RNA exosome cofactor that directs a subset of non-coding short-lived RNAs for exosomal degradation. May be involved in pre-mRNA splicing. It is required for 3'-end maturation of telomerase RNA component (TERC), TERC 3'-end targeting to the nuclear RNA exosome, and for telomerase function. The polypeptide is Zinc finger CCHC domain-containing protein 8 (ZCCHC8) (Pongo abelii (Sumatran orangutan)).